The chain runs to 107 residues: Nucleoid-associated protein PHZ_c0369 (107 aa).

Belongs to the YbaB/EbfC family. In terms of assembly, homodimer.

The protein resides in the cytoplasm. The protein localises to the nucleoid. Binds to DNA and alters its conformation. May be involved in regulation of gene expression, nucleoid organization and DNA protection. This is Nucleoid-associated protein PHZ_c0369 from Phenylobacterium zucineum (strain HLK1).